Here is a 339-residue protein sequence, read N- to C-terminus: Anthranilate phosphoribosyltransferase (339 aa).

5-phospho-alpha-D-ribose 1-diphosphate is bound by residues glycine 81, 84-85 (GD), threonine 89, 91-94 (NIST), 109-117 (KHGNRNLSS), and alanine 121. Glycine 81 is an anthranilate binding site. Serine 93 serves as a coordination point for Mg(2+). Asparagine 112 serves as a coordination point for anthranilate. Arginine 167 serves as a coordination point for anthranilate. Mg(2+) contacts are provided by aspartate 226 and glutamate 227.

It belongs to the anthranilate phosphoribosyltransferase family. As to quaternary structure, homodimer. Mg(2+) is required as a cofactor.

The catalysed reaction is N-(5-phospho-beta-D-ribosyl)anthranilate + diphosphate = 5-phospho-alpha-D-ribose 1-diphosphate + anthranilate. It functions in the pathway amino-acid biosynthesis; L-tryptophan biosynthesis; L-tryptophan from chorismate: step 2/5. Its function is as follows. Catalyzes the transfer of the phosphoribosyl group of 5-phosphorylribose-1-pyrophosphate (PRPP) to anthranilate to yield N-(5'-phosphoribosyl)-anthranilate (PRA). In Roseobacter denitrificans (strain ATCC 33942 / OCh 114) (Erythrobacter sp. (strain OCh 114)), this protein is Anthranilate phosphoribosyltransferase.